The primary structure comprises 179 residues: Large ribosomal subunit protein uL5 (179 aa).

The protein belongs to the universal ribosomal protein uL5 family. Part of the 50S ribosomal subunit; part of the 5S rRNA/L5/L18/L25 subcomplex. Contacts the 5S rRNA and the P site tRNA. Forms a bridge to the 30S subunit in the 70S ribosome.

In terms of biological role, this is one of the proteins that bind and probably mediate the attachment of the 5S RNA into the large ribosomal subunit, where it forms part of the central protuberance. In the 70S ribosome it contacts protein S13 of the 30S subunit (bridge B1b), connecting the 2 subunits; this bridge is implicated in subunit movement. Contacts the P site tRNA; the 5S rRNA and some of its associated proteins might help stabilize positioning of ribosome-bound tRNAs. The polypeptide is Large ribosomal subunit protein uL5 (Rickettsia bellii (strain OSU 85-389)).